Here is a 64-residue protein sequence, read N- to C-terminus: Large ribosomal subunit protein bL35 (64 aa).

The protein belongs to the bacterial ribosomal protein bL35 family.

This chain is Large ribosomal subunit protein bL35, found in Vibrio campbellii (strain ATCC BAA-1116).